Consider the following 373-residue polypeptide: MKLLSVLALSATASSVLGASIPVDTRAEKFLIELAPGETRWVTEEEKWALKESGQDFFDITDEEVGFTAAVAQPAVAYPTSIRHADAVNAMIATLSKENMQRDLTKLSSFHNRYYKSDYGKQSATWLQQQVQAAITASGANRYGAKVASFQHNFAQHSIIATIPGRSAEIVVVGAHQDSINGRSPMTGRAPGADDNGSGSVTILEALRGVLQDQTIVQGKAANTIEFHWYAGEEAGLLGSQAIFANYKQTGKKVKGMLNQDMTGYVKGMLDKGLKESFGIITDNVNANLTKFIRMVITKYCQIPTIDTRCGYACSDHASANRNGFPSAMVAESPIDLLDPHLHTDSDNISYLSFDHMIQHAKLVVGFVTELAK.

Residues 1–18 (MKLLSVLALSATASSVLG) form the signal peptide. A propeptide spanning residues 19–75 (ASIPVDTRAEKFLIELAPGETRWVTEEEKWALKESGQDFFDITDEEVGFTAAVAQPA) is cleaved from the precursor. Zn(2+) is bound by residues H176 and D195. An N-linked (GlcNAc...) asparagine glycan is attached at N196. Zn(2+) contacts are provided by E234 and D261. An N-linked (GlcNAc...) asparagine glycan is attached at N288. C310 and C314 are joined by a disulfide. Residue H343 coordinates Zn(2+). Residue N348 is glycosylated (N-linked (GlcNAc...) asparagine).

Belongs to the peptidase M28 family. M28E subfamily. Monomer. The cofactor is Zn(2+).

It is found in the secreted. In terms of biological role, extracellular aminopeptidase that allows assimilation of proteinaceous substrates. In Arthroderma gypseum (strain ATCC MYA-4604 / CBS 118893) (Microsporum gypseum), this protein is Leucine aminopeptidase 1 (LAP1).